The primary structure comprises 62 residues: Frontoxin III (62 aa).

4 disulfide bridges follow: Cys3-Cys24, Cys17-Cys41, Cys43-Cys54, and Cys55-Cys60.

Expressed by the venom gland.

It localises to the secreted. Its function is as follows. Binds to muscle nicotinic acetylcholine receptor (nAChR) and inhibit acetylcholine from binding to the receptor, thereby impairing neuromuscular transmission. This Micrurus frontalis (Coral snake) protein is Frontoxin III.